A 673-amino-acid chain; its full sequence is Polyunsaturated fatty acid 5-lipoxygenase (673 aa).

The region spanning 2 to 117 (PSYTVTVATG…EIVLRDGRAK (116 aa)) is the PLAT domain. 8 residues coordinate Ca(2+): glycine 17, threonine 18, aspartate 19, asparagine 44, aspartate 45, glutamate 47, aspartate 79, and aspartate 80. The 556-residue stretch at 118 to 673 (LARDDQIHIL…PDRIPNSVAI (556 aa)) folds into the Lipoxygenase domain. Serine 271 carries the phosphoserine modification. Fe cation-binding residues include histidine 367 and histidine 372. Serine 523 carries the post-translational modification Phosphoserine. Residues histidine 550, asparagine 554, and isoleucine 673 each coordinate Fe cation.

It belongs to the lipoxygenase family. Homodimer. Interacts with ALOX5AP and LTC4S. Interacts with COTL1, the interaction is required for stability and efficient catalytic activity. Interacts with PIK3R1; this interaction bridges ALOX5 with CD40 after CD40 ligation in B cells and leads to the production of reactive oxygen species (ROS). Interacts (via PLAT domain) with DICER1 (via Dicer dsRNA-binding fold domain); this interaction enhances arachidonate 5-lipoxygenase activity and modifies the miRNA precursor processing activity of DICER1. It depends on Fe cation as a cofactor. In terms of processing, serine phosphorylation by MAPKAPK2 is stimulated by arachidonic acid. Phosphorylation on Ser-523 by PKA has an inhibitory effect. Phosphorylation on Ser-271 prevents export from the nucleus. Phosphorylation at Ser-523 is stimulated by 8-bromo-3',5'-cyclic AMP or prostaglandin E2.

It localises to the cytoplasm. The protein resides in the nucleus matrix. It is found in the nucleus membrane. The protein localises to the perinuclear region. Its subcellular location is the cytosol. It localises to the nucleus envelope. The protein resides in the nucleus intermembrane space. The catalysed reaction is (5Z,8Z,11Z,14Z)-eicosatetraenoate + O2 = leukotriene A4 + H2O. It catalyses the reaction 18-HEPE + O2 = (5S)-hydroperoxy-18-hydroxy-(7E,9E,11Z,14Z,16E)-eicosapentaenoate. The enzyme catalyses (18R)-hydroxy-(5Z,8Z,11Z,14Z,16E)-eicosapentaenoate + O2 = (5S)-hydroperoxy-(18R)-hydroxy-(6E,8Z,11Z,14Z,16E)-eicosapentaenoate. It carries out the reaction (18S)-hydroxy-(5Z,8Z,11Z,14Z,16E)-eicosapentaenoate + O2 = (5S)-hydroperoxy-(18S)-hydroxy-(6E,8Z,11Z,14Z,16E)-eicosapentaenoate. The catalysed reaction is (5S)-hydroperoxy-(18S)-hydroxy-(6E,8Z,11Z,14Z,16E)-eicosapentaenoate = (5S,6S)-epoxy-(18S)-hydroxy-(7E,9E,11Z,14Z,16E)-eicosapentaenoate + H2O. It catalyses the reaction (5S)-hydroperoxy-(18R)-hydroxy-(6E,8Z,11Z,14Z,16E)-eicosapentaenoate = (5S,6S)-epoxy-(18R)-hydroxy-(7E,9E,11Z,14Z,16E)-eicosapentaenoate + H2O. The enzyme catalyses (5S)-hydroperoxy-18-hydroxy-(7E,9E,11Z,14Z,16E)-eicosapentaenoate = (5S,6S)-epoxy-18-hydroxy-(7E,9E,11Z,14Z,16E)-eicosapentaenoate + H2O. It carries out the reaction (5Z,8Z,11Z,14Z)-eicosatetraenoate + O2 = (5S)-hydroperoxy-(6E,8Z,11Z,14Z)-eicosatetraenoate. The catalysed reaction is (15S)-hydroxy-(5Z,8Z,11Z,13E)-eicosatetraenoate + O2 = (5S)-hydroperoxy-(15S)-hydroxy-(6E,8Z,11Z,13E)-eicosatetraenoate. It catalyses the reaction (5S)-hydroperoxy-(6E,8Z,11Z,14Z)-eicosatetraenoate = leukotriene A4 + H2O. The enzyme catalyses (5Z,8Z,11Z,14Z)-eicosatetraenoate + O2 = (8S)-hydroperoxy-(5Z,9E,11Z,14Z)-eicosatetraenoate. It carries out the reaction (5Z,8Z,11Z,14Z)-eicosatetraenoate + O2 = (12S)-hydroperoxy-(5Z,8Z,10E,14Z)-eicosatetraenoate. The catalysed reaction is (5Z,8Z)-eicosadienoate + O2 = (5S)-hydroperoxy-(6E,8Z)-eicosadienoate. It catalyses the reaction (12S)-hydroxy-(5Z,8Z,10E,14Z)-eicosatetraenoate + O2 = (5S)-hydroperoxy-(12S)-hydroxy-(6E,8Z,10E,14Z)-eicosatetraenoate. The enzyme catalyses (5Z,8Z,11Z,14Z,17Z)-eicosapentaenoate + O2 = 5-hydroperoxy-(6E,8Z,11Z,14Z,17Z)-eicosapentaenoate. It carries out the reaction (4Z,7Z,10Z,13Z,16Z,19Z)-docosahexaenoate + O2 = (14S)-hydroperoxy-(4Z,7Z,10Z,12E,16Z,19Z)-docosahexaenoate. The catalysed reaction is (4Z,7Z,10Z,13Z,16Z,19Z)-docosahexaenoate + O2 = (7S)-hydroperoxy-(4Z,8E,10Z,13Z,16Z,19Z)-docosahexaenoate. It catalyses the reaction (4Z,7Z,10Z,13Z,16Z,19Z)-docosahexaenoate + O2 = (17S)-hydroperoxy-(4Z,7Z,10Z,13Z,15E,19Z)-docosahexaenoate. It participates in lipid metabolism; leukotriene A4 biosynthesis. Its function is as follows. Catalyzes the oxygenation of arachidonate to 5-hydroperoxyeicosatetraenoate (5-HPETE) followed by the dehydration to 5,6- epoxyeicosatetraenoate (Leukotriene A4/LTA4), the first two steps in the biosynthesis of leukotrienes, which are potent mediators of inflammation. Also catalyzes the oxygenation of arachidonate into 8-hydroperoxyicosatetraenoate (8-HPETE) and 12-hydroperoxyicosatetraenoate (12-HPETE). Displays lipoxin synthase activity being able to convert (15S)-HETE into a conjugate tetraene. Although arachidonate is the preferred substrate, this enzyme can also metabolize oxidized fatty acids derived from arachidonate such as (15S)-HETE, eicosapentaenoate (EPA) such as (18R)- and (18S)-HEPE or docosahexaenoate (DHA) which lead to the formation of specialized pro-resolving mediators (SPM) lipoxin and resolvins E and D respectively, therefore it participates in anti-inflammatory responses. Oxidation of DHA directly inhibits endothelial cell proliferation and sprouting angiogenesis via peroxisome proliferator-activated receptor gamma (PPARgamma). It does not catalyze the oxygenation of linoleic acid and does not convert (5S)-HETE to lipoxin isomers. In addition to inflammatory processes, it participates in dendritic cell migration, wound healing through an antioxidant mechanism based on heme oxygenase-1 (HO-1) regulation expression, monocyte adhesion to the endothelium via ITGAM expression on monocytes. Moreover, it helps establish an adaptive humoral immunity by regulating primary resting B cells and follicular helper T cells and participates in the CD40-induced production of reactive oxygen species (ROS) after CD40 ligation in B cells through interaction with PIK3R1 that bridges ALOX5 with CD40. May also play a role in glucose homeostasis, regulation of insulin secretion and palmitic acid-induced insulin resistance via AMPK. Can regulate bone mineralization and fat cell differentiation increases in induced pluripotent stem cells. The sequence is that of Polyunsaturated fatty acid 5-lipoxygenase from Mesocricetus auratus (Golden hamster).